The primary structure comprises 479 residues: 3-isopropylmalate dehydratase large subunit (479 aa).

The [4Fe-4S] cluster site is built by Cys-353, Cys-414, and Cys-417.

The protein belongs to the aconitase/IPM isomerase family. LeuC type 1 subfamily. In terms of assembly, heterodimer of LeuC and LeuD. [4Fe-4S] cluster is required as a cofactor.

It carries out the reaction (2R,3S)-3-isopropylmalate = (2S)-2-isopropylmalate. It functions in the pathway amino-acid biosynthesis; L-leucine biosynthesis; L-leucine from 3-methyl-2-oxobutanoate: step 2/4. Functionally, catalyzes the isomerization between 2-isopropylmalate and 3-isopropylmalate, via the formation of 2-isopropylmaleate. The sequence is that of 3-isopropylmalate dehydratase large subunit from Xanthomonas campestris pv. campestris (strain 8004).